Reading from the N-terminus, the 368-residue chain is Quinolinate synthase (368 aa).

The iminosuccinate site is built by H46 and S63. Position 110 (C110) interacts with [4Fe-4S] cluster. Iminosuccinate contacts are provided by residues 141 to 143 (YVN) and S162. A [4Fe-4S] cluster-binding site is contributed by C230. Residues 256-258 (HPE) and T273 each bind iminosuccinate. Residue C320 participates in [4Fe-4S] cluster binding.

Belongs to the quinolinate synthase family. Type 3 subfamily. It depends on [4Fe-4S] cluster as a cofactor.

It is found in the cytoplasm. It carries out the reaction iminosuccinate + dihydroxyacetone phosphate = quinolinate + phosphate + 2 H2O + H(+). The protein operates within cofactor biosynthesis; NAD(+) biosynthesis; quinolinate from iminoaspartate: step 1/1. Catalyzes the condensation of iminoaspartate with dihydroxyacetone phosphate to form quinolinate. This chain is Quinolinate synthase, found in Bacillus cereus (strain B4264).